A 521-amino-acid chain; its full sequence is MDFSSNIASQLNAGTILPEGIVIITLMVVLIGDLIGGRNARMWLPYGAIAGLLAALFALYTAWDNPSTIGFLGAFNGDNLSIVFRGIIALSTIVTLLMSIRYVEQTGTSLAEFIGIMLTATLGGMFLSGANELVMIFISLEMLSISSYLMTGYMKRDPRSNEAALKYLLIGASSSAIFLYGSSLLYGLSGGETTLDTISAKILASDGSSSLGLAIALVFVIAGIAFKISAVPFHQWTPDVYEGSPTPVVAFLSVGSKAAGFALAIRLLVTAFSSIVDEWHLIFTALAILSMVLGNVVALAQTSMKRMLAYSSIGQAGFVMIGLTAGTDAGYSSMVFYLLVYLFMNLGAFSGVILFSLRTGTDQISEYAGLYQKDPLLTLGLSLCLLSLGGIPPLAGFFGKIYLFWAGWQAELYGLVLLALVTSVVSIYYYIRVVKMMVVKEPHEMSDSVKNYPEIRWNLEGMRPLQVGLVLSVIATSLAGILSNPLFSLANDSVTSTPILQSTIVNTRISQGEIPSSTIDP.

14 consecutive transmembrane segments (helical) span residues 16–36, 43–63, 80–100, 110–130, 133–153, 168–188, 211–231, 245–265, 279–299, 307–327, 335–355, 379–399, 401–421, and 467–487; these read ILPE…DLIG, WLPY…YTAW, LSIV…LMSI, LAEF…LSGA, LVMI…MTGY, LLIG…LYGL, LGLA…ISAV, PTPV…ALAI, WHLI…VVAL, MLAY…TAGT, VFYL…VILF, LGLS…GFFG, IYLF…LALV, and VGLV…NPLF.

It belongs to the complex I subunit 2 family. As to quaternary structure, NDH-1 can be composed of about 15 different subunits; different subcomplexes with different compositions have been identified which probably have different functions.

It localises to the cellular thylakoid membrane. It carries out the reaction a plastoquinone + NADH + (n+1) H(+)(in) = a plastoquinol + NAD(+) + n H(+)(out). It catalyses the reaction a plastoquinone + NADPH + (n+1) H(+)(in) = a plastoquinol + NADP(+) + n H(+)(out). Its function is as follows. NDH-1 shuttles electrons from an unknown electron donor, via FMN and iron-sulfur (Fe-S) centers, to quinones in the respiratory and/or the photosynthetic chain. The immediate electron acceptor for the enzyme in this species is believed to be plastoquinone. Couples the redox reaction to proton translocation, and thus conserves the redox energy in a proton gradient. Cyanobacterial NDH-1 also plays a role in inorganic carbon-concentration. This is NAD(P)H-quinone oxidoreductase subunit 2 from Crocosphaera subtropica (strain ATCC 51142 / BH68) (Cyanothece sp. (strain ATCC 51142)).